The primary structure comprises 223 residues: Enolase-phosphatase E1 (223 aa).

The protein belongs to the HAD-like hydrolase superfamily. MasA/MtnC family. In terms of assembly, monomer. The cofactor is Mg(2+).

It catalyses the reaction 5-methylsulfanyl-2,3-dioxopentyl phosphate + H2O = 1,2-dihydroxy-5-(methylsulfanyl)pent-1-en-3-one + phosphate. It functions in the pathway amino-acid biosynthesis; L-methionine biosynthesis via salvage pathway; L-methionine from S-methyl-5-thio-alpha-D-ribose 1-phosphate: step 3/6. The protein operates within amino-acid biosynthesis; L-methionine biosynthesis via salvage pathway; L-methionine from S-methyl-5-thio-alpha-D-ribose 1-phosphate: step 4/6. Functionally, bifunctional enzyme that catalyzes the enolization of 2,3-diketo-5-methylthiopentyl-1-phosphate (DK-MTP-1-P) into the intermediate 2-hydroxy-3-keto-5-methylthiopentenyl-1-phosphate (HK-MTPenyl-1-P), which is then dephosphorylated to form the acireductone 1,2-dihydroxy-3-keto-5-methylthiopentene (DHK-MTPene). This chain is Enolase-phosphatase E1, found in Aquifex aeolicus (strain VF5).